The following is a 517-amino-acid chain: MTEVRTRFAPSPSGFLHVGGARTALFNYLYAKAKKGKFLLRIEDTDQDRSTEASFKIILESLKWLGMEWDEGPGVGGPNGPYTQSERIHIYKEYTDKLIQEKKAYRCFCTAEELEGKKKQADAMGIPYIYDGKCSDLSDAEIGSQLEKKIPFTVRFKTPHKIVIVDDMIQGKVKFESKLIGDFIIVKSDGFPSYNYAVVIDDALMKITHVIRGVGHLSNTPRQILIFEAFGFPLPRFAHASEIVGTDGKKLSKRAGATSVLAFRDLGYSSETMRNYMALLGWTSPDGKEYMSDEELCSVFDVERCSKSPATFDVFKKLKEEEKESVDFNKLTILGLAEYLNPKSKLNWMSNKYIRDTKIETLGKALEPFLKDCQIPEAFKSGENPQLLSILDSVRVYLDRLIQAPPYIEEFFLENLSFENDEAKQLVLEGKGKEVVAEFYRIVKESSLTTPDAYKESMAKVGEITGEKGRTLFMPIRAITTGKSHGLELPILFSLLGQEKMVKRMEQLAGILGISLR.

Residues 10–20 (PSPSGFLHVGG) carry the 'HIGH' region motif. 4 residues coordinate Zn(2+): cysteine 107, cysteine 109, cysteine 134, and aspartate 136. Residues 250–254 (KLSKR) carry the 'KMSKS' region motif. Lysine 253 provides a ligand contact to ATP.

It belongs to the class-I aminoacyl-tRNA synthetase family. Glutamate--tRNA ligase type 1 subfamily. Monomer. The cofactor is Zn(2+).

It is found in the cytoplasm. The enzyme catalyses tRNA(Glu) + L-glutamate + ATP = L-glutamyl-tRNA(Glu) + AMP + diphosphate. Its function is as follows. Catalyzes the attachment of glutamate to tRNA(Glu) in a two-step reaction: glutamate is first activated by ATP to form Glu-AMP and then transferred to the acceptor end of tRNA(Glu). In Leptospira biflexa serovar Patoc (strain Patoc 1 / ATCC 23582 / Paris), this protein is Glutamate--tRNA ligase.